The primary structure comprises 361 residues: tRNA-specific 2-thiouridylase MnmA (361 aa).

ATP is bound by residues 11–18 (GMSGGVDS) and Met-37. Residues 97–99 (NPD) are interaction with target base in tRNA. The Nucleophile role is filled by Cys-102. Cys-102 and Cys-199 are oxidised to a cystine. Gly-126 contacts ATP. The interval 149–151 (KDQ) is interaction with tRNA. Cys-199 (cysteine persulfide intermediate) is an active-site residue. An interaction with tRNA region spans residues 311-312 (RY).

The protein belongs to the MnmA/TRMU family.

It localises to the cytoplasm. It carries out the reaction S-sulfanyl-L-cysteinyl-[protein] + uridine(34) in tRNA + AH2 + ATP = 2-thiouridine(34) in tRNA + L-cysteinyl-[protein] + A + AMP + diphosphate + H(+). Its function is as follows. Catalyzes the 2-thiolation of uridine at the wobble position (U34) of tRNA, leading to the formation of s(2)U34. The protein is tRNA-specific 2-thiouridylase MnmA of Cupriavidus necator (strain ATCC 17699 / DSM 428 / KCTC 22496 / NCIMB 10442 / H16 / Stanier 337) (Ralstonia eutropha).